A 33-amino-acid chain; its full sequence is Lysozyme C, spleen isozyme (33 aa).

The protein belongs to the glycosyl hydrolase 22 family. As to quaternary structure, monomer.

It carries out the reaction Hydrolysis of (1-&gt;4)-beta-linkages between N-acetylmuramic acid and N-acetyl-D-glucosamine residues in a peptidoglycan and between N-acetyl-D-glucosamine residues in chitodextrins.. Its function is as follows. Lysozymes have primarily a bacteriolytic function; those in tissues and body fluids are associated with the monocyte-macrophage system and enhance the activity of immunoagents. In Equus caballus (Horse), this protein is Lysozyme C, spleen isozyme.